The following is a 338-amino-acid chain: Holliday junction branch migration complex subunit RuvB (338 aa).

Residues 1–14 (MENDHGILSDHPSG) show a composition bias toward basic and acidic residues. Positions 1–21 (MENDHGILSDHPSGEEESQVE) are disordered. Residues 3 to 185 (NDHGILSDHP…FGIVEHMNYY (183 aa)) form a large ATPase domain (RuvB-L) region. ATP contacts are provided by residues Leu-24, Arg-25, Gly-66, Lys-69, Thr-70, Thr-71, 132–134 (EDY), Arg-175, Tyr-185, and Arg-222. Residue Thr-70 coordinates Mg(2+). The interval 186 to 256 (TQDELTKIIF…IVKQALSLLQ (71 aa)) is small ATPAse domain (RuvB-S). The interval 259–338 (DRGLDEIDRK…LGIEYPTDKN (80 aa)) is head domain (RuvB-H). DNA-binding residues include Arg-314 and Arg-319.

Belongs to the RuvB family. In terms of assembly, homohexamer. Forms an RuvA(8)-RuvB(12)-Holliday junction (HJ) complex. HJ DNA is sandwiched between 2 RuvA tetramers; dsDNA enters through RuvA and exits via RuvB. An RuvB hexamer assembles on each DNA strand where it exits the tetramer. Each RuvB hexamer is contacted by two RuvA subunits (via domain III) on 2 adjacent RuvB subunits; this complex drives branch migration. In the full resolvosome a probable DNA-RuvA(4)-RuvB(12)-RuvC(2) complex forms which resolves the HJ.

The protein localises to the cytoplasm. It catalyses the reaction ATP + H2O = ADP + phosphate + H(+). Its function is as follows. The RuvA-RuvB-RuvC complex processes Holliday junction (HJ) DNA during genetic recombination and DNA repair, while the RuvA-RuvB complex plays an important role in the rescue of blocked DNA replication forks via replication fork reversal (RFR). RuvA specifically binds to HJ cruciform DNA, conferring on it an open structure. The RuvB hexamer acts as an ATP-dependent pump, pulling dsDNA into and through the RuvAB complex. RuvB forms 2 homohexamers on either side of HJ DNA bound by 1 or 2 RuvA tetramers; 4 subunits per hexamer contact DNA at a time. Coordinated motions by a converter formed by DNA-disengaged RuvB subunits stimulates ATP hydrolysis and nucleotide exchange. Immobilization of the converter enables RuvB to convert the ATP-contained energy into a lever motion, pulling 2 nucleotides of DNA out of the RuvA tetramer per ATP hydrolyzed, thus driving DNA branch migration. The RuvB motors rotate together with the DNA substrate, which together with the progressing nucleotide cycle form the mechanistic basis for DNA recombination by continuous HJ branch migration. Branch migration allows RuvC to scan DNA until it finds its consensus sequence, where it cleaves and resolves cruciform DNA. The chain is Holliday junction branch migration complex subunit RuvB from Limosilactobacillus reuteri (strain DSM 20016) (Lactobacillus reuteri).